The chain runs to 237 residues: MGQKINPIGFRLGINRTWDSRWFADNAEYGQLLHEDLKIRAYLMEELKAAGIAKVVIERPHKKCRVTIHSARPGLIIGKKGADIEKLRKKLSEMTNSETHLNIVEVRKPEVDATLVAQSIAQQLERRVAFRRAMKRAVQSAMRLGAEGIKITCAGRLGGAEIARTEWYREGRVPLHTLRADIDYGTAEAETAFGICGVKVWIFKGEILEHDPMASERRATESDNQGGGGRDRRRENA.

The KH type-2 domain maps to Ile39–Arg107. The interval Met213–Ala237 is disordered.

Belongs to the universal ribosomal protein uS3 family. In terms of assembly, part of the 30S ribosomal subunit. Forms a tight complex with proteins S10 and S14.

Binds the lower part of the 30S subunit head. Binds mRNA in the 70S ribosome, positioning it for translation. The protein is Small ribosomal subunit protein uS3 of Sinorhizobium fredii (strain NBRC 101917 / NGR234).